A 263-amino-acid chain; its full sequence is L-erythrulose-1-phosphate isomerase (263 aa).

The active-site Electrophile is His106. The active-site Proton acceptor is Glu178.

Belongs to the triosephosphate isomerase family.

The catalysed reaction is L-erythrulose 1-phosphate = D-erythrulose 4-phosphate. The protein operates within carbohydrate metabolism; L-threitol degradation. In terms of biological role, catalyzes the isomerization of L-erythrulose-1P to D-erythrulose-4P. Involved in the degradation pathway of L-threitol, that allows M.smegmatis to grow on this compound as the sole carbon source. In Mycolicibacterium smegmatis (strain ATCC 700084 / mc(2)155) (Mycobacterium smegmatis), this protein is L-erythrulose-1-phosphate isomerase.